A 329-amino-acid chain; its full sequence is ATP-dependent (S)-NAD(P)H-hydrate dehydratase (329 aa).

One can recognise a YjeF C-terminal domain in the interval 35–326 (TLQLVRNIIP…AEVGAAFSKL (292 aa)). Phosphotyrosine is present on Tyr67. Residues Gly135 and 188–194 (NHMEFSR) each bind (6S)-NADPHX. Asn207 and Asn222 each carry an N-linked (GlcNAc...) asparagine glycan. ATP is bound by residues 228-232 (KGERD) and 247-256 (GSSRRCGGQG). Residue Asp257 coordinates (6S)-NADPHX. An N-linked (GlcNAc...) asparagine glycan is attached at Asn279.

This sequence belongs to the NnrD/CARKD family. Requires Mg(2+) as cofactor.

The protein localises to the mitochondrion. It catalyses the reaction (6S)-NADHX + ATP = ADP + phosphate + NADH + H(+). The enzyme catalyses (6S)-NADPHX + ATP = ADP + phosphate + NADPH + H(+). Its function is as follows. Catalyzes the dehydration of the S-form of NAD(P)HX at the expense of ATP, which is converted to ADP. Together with NAD(P)HX epimerase, which catalyzes the epimerization of the S- and R-forms, the enzyme allows the repair of both epimers of NAD(P)HX, a damaged form of NAD(P)H that is a result of enzymatic or heat-dependent hydration. The polypeptide is ATP-dependent (S)-NAD(P)H-hydrate dehydratase (Pongo abelii (Sumatran orangutan)).